The sequence spans 356 residues: (+)-(1(10)E,4E,6S,7R)-germacradien-6-ol synthase (356 aa).

Mg(2+) contacts are provided by Asp86 and Asp91. The DDXXXD motif signature appears at 86-91; sequence DDEYCD. Residue Arg181 participates in substrate binding. Residues Asn227 and Ser231 each contribute to the Mg(2+) site. Substrate is bound at residue Lys234. Glu235 is a binding site for Mg(2+). 314 to 315 serves as a coordination point for substrate; it reads RY.

Belongs to the terpene synthase family. It depends on Mg(2+) as a cofactor.

It catalyses the reaction (2E,6E)-farnesyl diphosphate + H2O = (+)-(1(10)E,4E,6S,7R)-germacradien-6-ol + diphosphate. The protein operates within secondary metabolite biosynthesis; terpenoid biosynthesis. Its function is as follows. Catalyzes the conversion of (2E,6E)-farnesyl diphosphate (FPP) to yield the sesquiterpene (+)-(1(10)E,4E,6S,7R)-germacradien-6-ol via a putative 1,10-cyclization, which could require the abstraction of the pyrophosphate from FPP to yield the (E,E)-germacradienyl cation. The only accepted substrate is farnesyl diphosphate (FPP). In Streptomyces pratensis (strain ATCC 33331 / IAF-45CD), this protein is (+)-(1(10)E,4E,6S,7R)-germacradien-6-ol synthase.